The chain runs to 167 residues: Golgin subfamily A member 7B (167 aa).

2 S-palmitoyl cysteine lipidation sites follow: Cys-78 and Cys-81. The tract at residues 140-167 (RCSSGSSSSGSSSGSGSSSAGGGGAGAR) is disordered. A compositionally biased stretch (low complexity) spans 142–157 (SSGSSSSGSSSGSGSS). Residues 158–167 (SAGGGGAGAR) show a composition bias toward gly residues.

The protein belongs to the ERF4 family. Palmitoylated by ZDHHC5. Palmitoylation is required for the maintenance of ZDHHC5 at the plasma membrane.

Its subcellular location is the cell membrane. The protein resides in the golgi apparatus membrane. Play a role in cell adhesion by regulating the plasma membrane localization of the palmitoyltransferase ZDHHC5. May be involved in protein transport from Golgi to cell surface. The protein is Golgin subfamily A member 7B (GOLGA7B) of Mus musculus (Mouse).